We begin with the raw amino-acid sequence, 382 residues long: Hyaluronidase (382 aa).

Residues 1-28 (MSRPLVITEGMMIGVLLMLAPINALLLG) constitute a signal peptide (or 24). Positions 29–33 (FVQST) are excised as a propeptide. Intrachain disulfides connect Cys-54–Cys-345 and Cys-221–Cys-233. N-linked (GlcNAc...) asparagine glycosylation occurs at Asn-115. The active-site Proton donor is Glu-145. N-linked (GlcNAc...) (complex) asparagine glycosylation occurs at Asn-263.

It belongs to the glycosyl hydrolase 56 family. As to quaternary structure, homotetramer. Post-translationally, N-glycosylated. Glycans found include a majority of small oligosaccharides (Man1-3GlcNAc2), most of which are either alpha 1,3-monofucosylated or alpha 1,3-(alpha 1,6-)difucosylated at the innermost GlcNAc residue, approximately 5% of high-mannose type structures, and 8% contains the terminal trisaccharide GalNAc beta 1-4[Fuc alpha 1-3]GlcNAc beta 1-in beta 1,2-linkage to the core alpha 1,3-mannosyl residue. As to expression, expressed in the venom glands of worker bees. It is also detected in the testes of drones but not in the queen-bee venom glands or in pupae.

Its subcellular location is the secreted. The enzyme catalyses Random hydrolysis of (1-&gt;4)-linkages between N-acetyl-beta-D-glucosamine and D-glucuronate residues in hyaluronate.. Its function is as follows. Hydrolyzes high molecular weight hyaluronic acid to produce small oligosaccharides. The sequence is that of Hyaluronidase from Apis mellifera (Honeybee).